A 207-amino-acid chain; its full sequence is Probable GTP-binding protein EngB (207 aa).

The 176-residue stretch at 24-199 (GGYEVAFAGR…RGIVGGWLGL (176 aa)) folds into the EngB-type G domain. GTP contacts are provided by residues 32 to 39 (GRSNAGKS), 59 to 63 (GRTQQ), 77 to 80 (DLPG), 144 to 147 (TKAD), and 178 to 180 (YSG). The Mg(2+) site is built by serine 39 and threonine 61.

This sequence belongs to the TRAFAC class TrmE-Era-EngA-EngB-Septin-like GTPase superfamily. EngB GTPase family. Mg(2+) is required as a cofactor.

In terms of biological role, necessary for normal cell division and for the maintenance of normal septation. This chain is Probable GTP-binding protein EngB, found in Xanthomonas campestris pv. campestris (strain 8004).